Here is a 247-residue protein sequence, read N- to C-terminus: Sugar fermentation stimulation protein homolog (247 aa).

It belongs to the SfsA family.

The polypeptide is Sugar fermentation stimulation protein homolog (Aeromonas salmonicida (strain A449)).